A 132-amino-acid chain; its full sequence is Small ribosomal subunit protein uS8 (132 aa).

Belongs to the universal ribosomal protein uS8 family. Part of the 30S ribosomal subunit. Contacts proteins S5 and S12.

One of the primary rRNA binding proteins, it binds directly to 16S rRNA central domain where it helps coordinate assembly of the platform of the 30S subunit. The sequence is that of Small ribosomal subunit protein uS8 from Mycobacterium avium (strain 104).